The chain runs to 140 residues: Putative pre-16S rRNA nuclease (140 aa).

The protein belongs to the YqgF nuclease family.

The protein resides in the cytoplasm. Its function is as follows. Could be a nuclease involved in processing of the 5'-end of pre-16S rRNA. The polypeptide is Putative pre-16S rRNA nuclease (Chlorobium chlorochromatii (strain CaD3)).